Consider the following 436-residue polypeptide: UPF0597 protein YhaM (436 aa).

Belongs to the UPF0597 family.

Functionally, thought to be a D-serine dehydratase, however it does not complement a dsdA (D-serine dehydratase) mutant in strain CFT073, suggesting it may not have that function. In Escherichia coli O157:H7, this protein is UPF0597 protein YhaM.